Consider the following 821-residue polypeptide: DNA replication licensing factor MCM6 (821 aa).

Position 1 is an N-acetylmethionine (Met-1). A phosphoserine mark is found at Ser-13, Ser-219, and Ser-271. Thr-278 bears the Phosphothreonine mark. Residues Leu-346–Val-553 form the MCM domain. His-359, Ser-399, Thr-400, Ala-401, Lys-402, Ser-403, and Asn-504 together coordinate ATP. The Arginine finger signature appears at Ser-528 to Asp-531. ADP is bound by residues Arg-619 and Glu-622. Position 643 is an N6-acetyllysine (Lys-643). The interval Val-676–Asp-706 is disordered. 2 positions are modified to phosphoserine: Ser-689 and Ser-762. At Thr-791 the chain carries Phosphothreonine.

This sequence belongs to the MCM family. As to quaternary structure, component of the MCM2-7 complex. The complex forms a toroidal hexameric ring with the proposed subunit order MCM2-MCM6-MCM4-MCM7-MCM3-MCM5. Component of the CMG helicase complex, a hexameric ring of related MCM2-7 subunits stabilized by CDC45 and the tetrameric GINS complex. May interact with MCM10. Interacts with TIPIN. Interacts with CDT1. Interacts with MCMBP. Interacts with DDI2. Post-translationally, O-glycosylated (O-GlcNAcylated), in a cell cycle-dependent manner.

It localises to the nucleus. The protein localises to the chromosome. It catalyses the reaction ATP + H2O = ADP + phosphate + H(+). Its function is as follows. Acts as a component of the MCM2-7 complex (MCM complex) which is the replicative helicase essential for 'once per cell cycle' DNA replication initiation and elongation in eukaryotic cells. Core component of CDC45-MCM-GINS (CMG) helicase, the molecular machine that unwinds template DNA during replication, and around which the replisome is built. The active ATPase sites in the MCM2-7 ring are formed through the interaction surfaces of two neighboring subunits such that a critical structure of a conserved arginine finger motif is provided in trans relative to the ATP-binding site of the Walker A box of the adjacent subunit. The six ATPase active sites, however, are likely to contribute differentially to the complex helicase activity. The sequence is that of DNA replication licensing factor MCM6 (MCM6) from Bos taurus (Bovine).